Consider the following 204-residue polypeptide: dITP/XTP pyrophosphatase (204 aa).

8–13 (SNNAKK) contacts substrate. The Mg(2+) site is built by Glu-43 and Asp-72. The active-site Proton acceptor is Asp-72. Substrate-binding positions include Ser-73, 155–158 (FGYD), Lys-180, and 185–186 (HR).

Belongs to the HAM1 NTPase family. As to quaternary structure, homodimer. The cofactor is Mg(2+).

The enzyme catalyses XTP + H2O = XMP + diphosphate + H(+). It carries out the reaction dITP + H2O = dIMP + diphosphate + H(+). It catalyses the reaction ITP + H2O = IMP + diphosphate + H(+). Its function is as follows. Pyrophosphatase that catalyzes the hydrolysis of nucleoside triphosphates to their monophosphate derivatives, with a high preference for the non-canonical purine nucleotides XTP (xanthosine triphosphate), dITP (deoxyinosine triphosphate) and ITP. Seems to function as a house-cleaning enzyme that removes non-canonical purine nucleotides from the nucleotide pool, thus preventing their incorporation into DNA/RNA and avoiding chromosomal lesions. This chain is dITP/XTP pyrophosphatase, found in Cutibacterium acnes (strain DSM 16379 / KPA171202) (Propionibacterium acnes).